The following is a 1409-amino-acid chain: MAP kinase-activating death domain protein (1409 aa).

Residues 26–230 (RGASQSSPDA…VPVPGKTKVQ (205 aa)) enclose the uDENN domain. Residues 251 to 390 (RFTLIDFPLH…DATHLKERLK (140 aa)) form the cDENN domain. In terms of domain architecture, dDENN spans 392–496 (AINKMTTMTV…ECCLCPKNET (105 aa)). Disordered stretches follow at residues 654–701 (SFDH…MKGL), 761–784 (QHIV…QSKN), 902–1008 (SSSA…KVKT), and 1015–1034 (PQNL…SFLA). Polar residues-rich tracts occupy residues 680–691 (SDASDTPTSRGS) and 761–772 (QHIVRSKTQPNP). 2 stretches are compositionally biased toward low complexity: residues 773 to 784 (TSQQTANQQSKN) and 902 to 913 (SSSAPSTMTTPS). Residues 915–925 (HSNDILKESRP) show a composition bias toward basic and acidic residues. Positions 941 to 961 (LGQNVTPTSTNNHEIAQSTRS) are enriched in polar residues. A compositionally biased stretch (pro residues) spans 963-1003 (ALPPPVPPREAPPIPKRNPPPLGAPPKVPEGARAPPPLPPR). Low complexity predominate over residues 1020-1031 (PNNQPAQPSSPS). In terms of domain architecture, Death spans 1109–1184 (GMDQEPSEMI…GLVCSKEINK (76 aa)).

The protein belongs to the MADD family. As to quaternary structure, interacts with cab-1. Expressed in nearly all neurons.

It is found in the cell membrane. The protein resides in the cytoplasm. Functionally, guanyl-nucleotide exchange factor that regulates small GTPases. Converts GDP-bound inactive form of rab-3 and cab-1 to the GTP-bound active forms. Regulator of presynaptic activity that interacts with rab-3 to regulate synaptic vesicle release. Is also a regulator of the cab-1 synaptic transmission pathway. Probably by converting rab-3 to its GTP-bound active form, plays a role in the recruitment of endophilin unc-57 to synaptic vesicles. Probably by activating rab-3 and thus regulating the trafficking of dense-core vesicles, plays a role in AVG neuron-mediated formation of the right axon tract of the ventral nerve cord. Regulates anterior body muscle contractions (aBOC) and the expulsion steps during the defecation motor program (DMP). Probably by regulating DMP, required for fatty acid uptake by intestinal cells. This chain is MAP kinase-activating death domain protein (aex-3), found in Caenorhabditis elegans.